Consider the following 78-residue polypeptide: uncharacterized protein (78 aa).

Residues 1-78 (MSSNSNTDHS…VDLEGPKDEQ (78 aa)) are disordered. Basic and acidic residues-rich tracts occupy residues 10–33 (STGDNRSKSEKQTDLRNALRETES) and 63–78 (LNLKEPVDLEGPKDEQ).

This is an uncharacterized protein from Schizosaccharomyces pombe (strain 972 / ATCC 24843) (Fission yeast).